We begin with the raw amino-acid sequence, 509 residues long: MWLLLAVFLLTLAYLFWPKTKHSGAKYPRSLPSLPLVGSLPFLPRRGQQHKNFFKLQEKYGPIYSFRLGSKTTVMIGHHQLAREVLLKKGKEFSGRPKVATLDILSDNQKGIAFADHGAHWQLHRKLALNAFALFKDGNLKLEKIINQEANVLCDFLATQHGEAIDLSEPLSLAVTNIISFICFNFSFKNEDPALKAIQNVNDGILEVLSKEVLLDIFPVLKIFPSKAMEKMKGYVQTRNELLNEILEKCQENFSSDSITNLLHILIQAKVNADNNNAGPDQDSKLLSSRHMLATIGDIFGAGVETTTSVIKWIVAYLLHHPSLKKRIQDDIDQIIGFNRTPAISDRNRLVLLEATIREVLRIRPVAPTLIPHKAVIDSSIGDLTIDKGTDVVVNLWALHHSEKEWQHPDLFMPERFLDPTGTQLISPSLSYLPFGAGPRSCVGEMLARQELFLFMSRLLQRFNLEIPDDGKLPSLEGHASLVLQIKPFKVKIEVRQAWKEAQAEGSTP.

N202 contributes to the substrate binding site. Residue C442 coordinates heme.

Belongs to the cytochrome P450 family. It depends on heme as a cofactor.

It localises to the endoplasmic reticulum membrane. The protein resides in the microsome membrane. The catalysed reaction is a C21-steroid + reduced [NADPH--hemoprotein reductase] + O2 = a 17alpha-hydroxy-C21-steroid + oxidized [NADPH--hemoprotein reductase] + H2O + H(+). The enzyme catalyses progesterone + reduced [NADPH--hemoprotein reductase] + O2 = 17alpha-hydroxyprogesterone + oxidized [NADPH--hemoprotein reductase] + H2O + H(+). It catalyses the reaction pregnenolone + reduced [NADPH--hemoprotein reductase] + O2 = 17alpha-hydroxypregnenolone + oxidized [NADPH--hemoprotein reductase] + H2O + H(+). It carries out the reaction 17alpha-hydroxyprogesterone + reduced [NADPH--hemoprotein reductase] + O2 = androst-4-ene-3,17-dione + acetate + oxidized [NADPH--hemoprotein reductase] + H2O + 2 H(+). The catalysed reaction is 17alpha-hydroxyprogesterone + reduced [NADPH--hemoprotein reductase] + O2 = 16alpha,17alpha-dihydroxyprogesterone + oxidized [NADPH--hemoprotein reductase] + H2O + H(+). The enzyme catalyses 16alpha,17alpha-dihydroxyprogesterone + reduced [NADPH--hemoprotein reductase] + O2 = 6beta,16alpha,17alpha-trihydroxyprogesterone + oxidized [NADPH--hemoprotein reductase] + H2O + H(+). It catalyses the reaction 17alpha-hydroxypregnenolone + reduced [NADPH--hemoprotein reductase] + O2 = 3beta-hydroxyandrost-5-en-17-one + acetate + oxidized [NADPH--hemoprotein reductase] + H2O + 2 H(+). It carries out the reaction 16alpha,17alpha-dihydroxypregnenolone + reduced [NADPH--hemoprotein reductase] + O2 = 3beta,16alpha-dihydroxy-androst-5-en-17-one + acetate + oxidized [NADPH--hemoprotein reductase] + H2O + 2 H(+). The catalysed reaction is 3beta-hydroxyandrost-5-en-17-one + reduced [NADPH--hemoprotein reductase] + O2 = 3beta,16alpha-dihydroxy-androst-5-en-17-one + oxidized [NADPH--hemoprotein reductase] + H2O + H(+). The enzyme catalyses androst-4-ene-3,17-dione + reduced [NADPH--hemoprotein reductase] + O2 = 16alpha-hydroxyandrost-4-ene-3,17-dione + oxidized [NADPH--hemoprotein reductase] + H2O + H(+). The protein operates within steroid hormone biosynthesis. Its pathway is steroid biosynthesis; glucocorticoid biosynthesis. With respect to regulation, regulated predominantly by intracellular cAMP levels. The 17,20-lyase activity is stimulated by cytochrome b5, which acts as an allosteric effector increasing the Vmax of the lyase activity. Functionally, a cytochrome P450 monooxygenase involved in corticoid and androgen biosynthesis. Catalyzes 17-alpha hydroxylation of C21 steroids, which is common for both pathways. A second oxidative step, required only for androgen synthesis, involves an acyl-carbon cleavage. The 17-alpha hydroxy intermediates, as part of adrenal glucocorticoids biosynthesis pathway, are precursors of cortisol. Hydroxylates steroid hormones, pregnenolone and progesterone to form 17-alpha hydroxy metabolites, followed by the cleavage of the C17-C20 bond to form C19 steroids, dehydroepiandrosterone (DHEA) and androstenedione. Has 16-alpha hydroxylase activity. Catalyzes 16-alpha hydroxylation of 17-alpha hydroxy pregnenolone, followed by the cleavage of the C17-C20 bond to form 16-alpha-hydroxy DHEA. Also 16-alpha hydroxylates androgens, relevant for estriol synthesis. Mechanistically, uses molecular oxygen inserting one oxygen atom into a substrate, and reducing the second into a water molecule, with two electrons provided by NADPH via cytochrome P450 reductase (CPR; NADPH-ferrihemoprotein reductase). This is Steroid 17-alpha-hydroxylase/17,20 lyase (CYP17A1) from Bison bison (American bison).